Reading from the N-terminus, the 391-residue chain is Multidrug resistance protein MdtL (391 aa).

The Cytoplasmic portion of the chain corresponds to 1–3; the sequence is MSR. Residues 4-24 traverse the membrane as a helical segment; sequence FLICSFALVLLYPAGIDMYLV. Topologically, residues 25-41 are periplasmic; the sequence is GLPRIAADLNASEAQLH. A helical transmembrane segment spans residues 42 to 62; sequence IAFSVYLAGMAAAMLFAGKVA. Over 63-68 the chain is Cytoplasmic; that stretch reads DRSGRK. The helical transmembrane segment at 69–89 threads the bilayer; that stretch reads PVAIPGAALFIIASVFCSLAE. Topologically, residues 90 to 92 are periplasmic; it reads TST. The chain crosses the membrane as a helical span at residues 93–113; the sequence is LFLAGRFLQGLGAGCCYVVAF. Residues 114–130 are Cytoplasmic-facing; it reads AILRDTLDDRRRAKVLS. The chain crosses the membrane as a helical span at residues 131–151; sequence LLNGITCIIPVLAPVLGHLIM. Topologically, residues 152 to 157 are periplasmic; it reads LKFPWQ. Residues 158–178 form a helical membrane-spanning segment; the sequence is SLFWAMAMMGIAVLMLSLFIL. Residues 179-202 lie on the Cytoplasmic side of the membrane; that stretch reads KETRPASPAASDKPRENSESLLNR. Residues 203–222 form a helical membrane-spanning segment; it reads FFLSRVVITTLSVSVILTFV. Residues 223-244 lie on the Periplasmic side of the membrane; the sequence is NTSPVLLMEIMGFERGEYATIM. A helical membrane pass occupies residues 245–265; it reads ALTAGVSMTFSFSTPFALGIF. The Cytoplasmic portion of the chain corresponds to 266 to 268; sequence KPR. A helical transmembrane segment spans residues 269–289; it reads TLMITSQVLFLAAGITLAVSP. Over 290 to 292 the chain is Periplasmic; sequence SHA. The chain crosses the membrane as a helical span at residues 293-313; sequence VSLFGITLICAGFSVGFGVAM. Over 314–330 the chain is Cytoplasmic; that stretch reads SQALGPFSLRAGVASST. A helical transmembrane segment spans residues 331-351; that stretch reads LGIAQVCGSSLWIWLAAVVGI. The Periplasmic portion of the chain corresponds to 352-355; the sequence is GAWN. Residues 356–376 form a helical membrane-spanning segment; sequence MLIGILIACSIVSLLLIMFVA. Topologically, residues 377–391 are cytoplasmic; sequence PGRPVAAHEEIHHHA.

Belongs to the major facilitator superfamily. DHA1 family. MdtL (TC 2.A.1.2.22) subfamily.

It is found in the cell inner membrane. This chain is Multidrug resistance protein MdtL (mdtL), found in Shigella flexneri.